The sequence spans 504 residues: Tachykinin-like peptides receptor 86C (504 aa).

Residues M1 to T84 are Extracellular-facing. Residues N12, N28, and N36 are each glycosylated (N-linked (GlcNAc...) asparagine). A helical transmembrane segment spans residues I85 to V108. Residues T109–T118 are Cytoplasmic-facing. The chain crosses the membrane as a helical span at residues N119–F143. Residues M144–Y155 lie on the Extracellular side of the membrane. The helical transmembrane segment at C156–F179 threads the bilayer. Over D180 to R199 the chain is Cytoplasmic. The chain crosses the membrane as a helical span at residues I200 to T224. At K225–A250 the chain is on the extracellular side. Residues D251–S275 traverse the membrane as a helical segment. Topologically, residues L276–F308 are cytoplasmic. A helical membrane pass occupies residues I309–Y330. Over H331 to H343 the chain is Extracellular. A helical membrane pass occupies residues M344 to N367. Topologically, residues K368 to M504 are cytoplasmic. Residues P393 to N450 form a disordered region. Composition is skewed to polar residues over residues S395 to N404 and K416 to N450.

It belongs to the G-protein coupled receptor 1 family. In terms of tissue distribution, expressed in central nervous system, as well as in subsets of neurons in each segment of the developing ventral ganglia.

It is found in the cell membrane. Functionally, receptor for tachykinin-like peptides. The sequence is that of Tachykinin-like peptides receptor 86C (TkR86C) from Drosophila melanogaster (Fruit fly).